The chain runs to 446 residues: Chromosomal replication initiator protein DnaA (446 aa).

The segment at 1–72 (MENILDLWNQ…ADTIYELTGE (72 aa)) is domain I, interacts with DnaA modulators. The interval 72 to 109 (EELSVKFVIPQNQDEENFLPKPQVKKAAKEEPSDFPQS) is domain II. Residues 110 to 326 (MLNPKYTFDT…GALIRVVAYS (217 aa)) are domain III, AAA+ region. Gly-154, Gly-156, Lys-157, and Thr-158 together coordinate ATP. Residues 327–446 (SLINKDINAD…QVKEIKELLK (120 aa)) are domain IV, binds dsDNA.

The protein belongs to the DnaA family. In terms of assembly, oligomerizes as a right-handed, spiral filament on DNA at oriC.

It is found in the cytoplasm. In terms of biological role, plays an essential role in the initiation and regulation of chromosomal replication. ATP-DnaA binds to the origin of replication (oriC) to initiate formation of the DNA replication initiation complex once per cell cycle. Binds the DnaA box (a 9 base pair repeat at the origin) and separates the double-stranded (ds)DNA. Forms a right-handed helical filament on oriC DNA; dsDNA binds to the exterior of the filament while single-stranded (ss)DNA is stabiized in the filament's interior. The ATP-DnaA-oriC complex binds and stabilizes one strand of the AT-rich DNA unwinding element (DUE), permitting loading of DNA polymerase. After initiation quickly degrades to an ADP-DnaA complex that is not apt for DNA replication. Binds acidic phospholipids. In Bacillus velezensis (strain DSM 23117 / BGSC 10A6 / LMG 26770 / FZB42) (Bacillus amyloliquefaciens subsp. plantarum), this protein is Chromosomal replication initiator protein DnaA.